A 379-amino-acid polypeptide reads, in one-letter code: DNA-directed RNA polymerase subunit Rpo1C (379 aa).

It belongs to the RNA polymerase beta' chain family. As to quaternary structure, part of the RNA polymerase complex.

It is found in the cytoplasm. It catalyses the reaction RNA(n) + a ribonucleoside 5'-triphosphate = RNA(n+1) + diphosphate. Functionally, DNA-dependent RNA polymerase (RNAP) catalyzes the transcription of DNA into RNA using the four ribonucleoside triphosphates as substrates. Forms part of the jaw domain. This Pyrobaculum aerophilum (strain ATCC 51768 / DSM 7523 / JCM 9630 / CIP 104966 / NBRC 100827 / IM2) protein is DNA-directed RNA polymerase subunit Rpo1C.